The sequence spans 339 residues: AT-hook motif nuclear-localized protein 26 (339 aa).

Residues 1 to 12 (MDPVQSHGSQSS) are compositionally biased toward polar residues. Disordered stretches follow at residues 1 to 132 (MDPV…NKPK) and 273 to 339 (MQTP…RPPY). Over residues 24–45 (LHLQQQQQHQQQHQQQQQQQFF) the composition is skewed to low complexity. Over residues 82-93 (NMDNIANTNSGS) the composition is skewed to polar residues. Gly residues predominate over residues 102-113 (GGEGGSGGGGSG). Positions 118–130 (RRPRGRPAGSKNK) form a DNA-binding region, a.T hook. The PPC domain maps to 142–279 (ANALRTHVME…EDEMQTPVQG (138 aa)). Positions 278 to 291 (QGGGGGGGGGGGMG) are enriched in gly residues. Low complexity predominate over residues 292–310 (SPPMMGQQQAMAAMAAAQG).

The protein resides in the nucleus. Its function is as follows. Transcription factor that specifically binds AT-rich DNA sequences related to the nuclear matrix attachment regions (MARs). The chain is AT-hook motif nuclear-localized protein 26 from Arabidopsis thaliana (Mouse-ear cress).